A 437-amino-acid chain; its full sequence is Proton/glutamate-aspartate symporter (437 aa).

Residues Met-1 to Lys-5 lie on the Cytoplasmic side of the membrane. A helical transmembrane segment spans residues Phe-6–Leu-26. Topologically, residues His-27–His-50 are periplasmic. Residues Leu-51 to Val-71 traverse the membrane as a helical segment. The Cytoplasmic segment spans residues Gly-72–Thr-84. The chain crosses the membrane as a helical span at residues Ile-85–Val-105. Over Phe-106 to Glu-159 the chain is Periplasmic. A helical transmembrane segment spans residues Met-160–Thr-180. At His-181–Gly-210 the chain is on the cytoplasmic side. A helical membrane pass occupies residues Val-211 to Ala-231. Position 232 (Lys-232) is a topological domain, periplasmic. A helical membrane pass occupies residues Leu-233–Ala-253. Residues Arg-254–Glu-292 are Cytoplasmic-facing. The helical transmembrane segment at Ala-293–Leu-313 threads the bilayer. Residues Asp-314–Ala-324 lie on the Periplasmic side of the membrane. The helical transmembrane segment at Ile-325–Leu-345 threads the bilayer. Residues Thr-346–Ser-361 are Cytoplasmic-facing. The helical transmembrane segment at Phe-362 to Ile-382 threads the bilayer. Over Ala-383–Arg-387 the chain is Periplasmic. A helical membrane pass occupies residues Ile-388–Ile-408. Residues Ala-409 to Gln-437 lie on the Cytoplasmic side of the membrane.

This sequence belongs to the dicarboxylate/amino acid:cation symporter (DAACS) (TC 2.A.23) family. GltP subfamily.

The protein localises to the cell inner membrane. Its activity is regulated as follows. Glutamate uptake is inhibited by L-cysteate and beta-hydroxyaspartate. Inhibited by the uncoupler carbonylcyanide m-chlorophenylhydrazone (CCCP). Its function is as follows. Catalyzes the proton-dependent, binding-protein-independent transport of glutamate and aspartate. The sequence is that of Proton/glutamate-aspartate symporter from Escherichia coli (strain K12).